A 498-amino-acid polypeptide reads, in one-letter code: ATP synthase subunit beta, chloroplastic (498 aa).

Residue 172-179 (GGAGVGKT) participates in ATP binding.

It belongs to the ATPase alpha/beta chains family. As to quaternary structure, F-type ATPases have 2 components, CF(1) - the catalytic core - and CF(0) - the membrane proton channel. CF(1) has five subunits: alpha(3), beta(3), gamma(1), delta(1), epsilon(1). CF(0) has four main subunits: a(1), b(1), b'(1) and c(9-12).

The protein resides in the plastid. It is found in the chloroplast thylakoid membrane. The enzyme catalyses ATP + H2O + 4 H(+)(in) = ADP + phosphate + 5 H(+)(out). Produces ATP from ADP in the presence of a proton gradient across the membrane. The catalytic sites are hosted primarily by the beta subunits. In Agapanthus africanus (Lily of the Nile), this protein is ATP synthase subunit beta, chloroplastic.